Reading from the N-terminus, the 416-residue chain is Notoamide biosynthesis cluster protein N' (416 aa).

An N-terminal signal peptide occupies residues 1-16; that stretch reads MRAALLTLAFTALAAA. Residues asparagine 119 and asparagine 262 are each glycosylated (N-linked (GlcNAc...) asparagine).

Functionally, part of the gene cluster that mediates the biosynthesis of notoamide, a fungal indole alkaloid that belongs to a family of natural products containing a characteristic bicyclo[2.2.2]diazaoctane core. The first step of notoamide biosynthesis involves coupling of L-proline and L-tryptophan by the bimodular NRPS notE', to produce cyclo-L-tryptophan-L-proline called brevianamide F. The reverse prenyltransferase notF' then acts as a deoxybrevianamide E synthase and converts brevianamide F to deoxybrevianamide E via reverse prenylation at C-2 of the indole ring leading to the bicyclo[2.2.2]diazaoctane core. Deoxybrevianamide E is further hydroxylated at C-6 of the indole ring, likely catalyzed by the cytochrome P450 monooxygenase notG', to yield 6-hydroxy-deoxybrevianamide E. 6-hydroxy-deoxybrevianamide E is a specific substrate of the prenyltransferase notC' for normal prenylation at C-7 to produce 6-hydroxy-7-prenyl-deoxybrevianamide, also called notoamide S. As the proposed pivotal branching point in notoamide biosynthesis, notoamide S can be diverted to notoamide E through an oxidative pyran ring closure putatively catalyzed by either notH' cytochrome P450 monooxygenase or the notD' FAD-linked oxidoreductase. This step would be followed by an indole 2,3-epoxidation-initiated pinacol-like rearrangement catalyzed by the notB' FAD-dependent monooxygenase leading to the formation of notoamide C and notoamide D. On the other hand notoamide S is converted to notoamide T by notH' (or notD'), a bifunctional oxidase that also functions as the intramolecular Diels-Alderase responsible for generation of (-)-notoamide T. To generate antipodal (+)-notoaminide T, notH (or notD) in Aspergillus strain MF297-2 is expected to catalyze a Diels-Alder reaction leading to the opposite stereochemistry. The remaining oxidoreductase notD' (or notH') likely catalyzes the oxidative pyran ring formation to yield (-)-stephacidin A. The FAD-dependent monooxygenase notI' is highly similar to notB' and is predicted to catalyze a similar conversion from (-)-stephacidin A to (+)-notoamide B via the 2,3-epoxidation of (-)-stephacidin A followed by a pinacol-type rearrangement. Finally, it remains unclear which enzyme could be responsible for the final hydroxylation steps leading to notoamide A and sclerotiamide. The function of notN' in the notoamide biosynthesis has not been determined yet. The protein is Notoamide biosynthesis cluster protein N' of Aspergillus versicolor.